The primary structure comprises 271 residues: Acetyl-coenzyme A carboxylase carboxyl transferase subunit alpha (271 aa).

A CoA carboxyltransferase C-terminal domain is found at 1-247; it reads MSRELIRTVD…KKTILEALGE (247 aa).

It belongs to the AccA family. In terms of assembly, acetyl-CoA carboxylase is a heterohexamer composed of biotin carboxyl carrier protein (AccB), biotin carboxylase (AccC) and two subunits each of ACCase subunit alpha (AccA) and ACCase subunit beta (AccD).

Its subcellular location is the cytoplasm. It catalyses the reaction N(6)-carboxybiotinyl-L-lysyl-[protein] + acetyl-CoA = N(6)-biotinyl-L-lysyl-[protein] + malonyl-CoA. It functions in the pathway lipid metabolism; malonyl-CoA biosynthesis; malonyl-CoA from acetyl-CoA: step 1/1. Component of the acetyl coenzyme A carboxylase (ACC) complex. First, biotin carboxylase catalyzes the carboxylation of biotin on its carrier protein (BCCP) and then the CO(2) group is transferred by the carboxyltransferase to acetyl-CoA to form malonyl-CoA. The sequence is that of Acetyl-coenzyme A carboxylase carboxyl transferase subunit alpha from Clostridium perfringens (strain SM101 / Type A).